The chain runs to 402 residues: Multidrug resistance protein MdtG (402 aa).

11 helical membrane passes run 14 to 34, 52 to 72, 90 to 110, 113 to 133, 149 to 169, 171 to 191, 219 to 239, 254 to 274, 288 to 308, 318 to 338, and 376 to 396; these read LYIV…IMPF, LWTG…APFW, LGMA…QLLI, ALLG…ATQV, AVSG…LYGL, PVFF…LFFV, VICL…VTPI, LAFI…ISAP, VLIF…LVSN, LLGA…LYNI, and AVFY…WISF.

This sequence belongs to the major facilitator superfamily. DHA1 family. MdtG (TC 2.A.1.2.20) subfamily.

The protein localises to the cell inner membrane. The chain is Multidrug resistance protein MdtG from Proteus mirabilis (strain HI4320).